We begin with the raw amino-acid sequence, 281 residues long: Dexamethasone-induced Ras-related protein 1 (281 aa).

Position 11 is an S-nitrosocysteine (cysteine 11). 31–38 contributes to the GTP binding site; that stretch reads GSSKVGKT. The Effector region signature appears at 53–61; it reads YTPTIEDFH. Residues 78–82 and 145–148 each bind GTP; these read DTSGN and NKGD. The residue at position 278 (cysteine 278) is a Cysteine methyl ester. Cysteine 278 carries S-farnesyl cysteine lipidation. Positions 279 to 281 are cleaved as a propeptide — removed in mature form; sequence VIS.

This sequence belongs to the small GTPase superfamily. RasD family. Forms a ternary complex with CAPON and NOS1. Component of a complex, at least composed of APBB1, RASD1/DEXRAS1 and APP. Interacts with APBB1/FE65. Post-translationally, S-nitrosylation stimulates guanine-nucleotide exchange activity. Expressed in a variety of tissues including heart, cardiovascular tissues, brain, placenta, lung, liver, skeletal muscle, kidney, pancreas, gastrointestinal and reproductive tissues.

It localises to the cell membrane. Its subcellular location is the cytoplasm. The protein localises to the perinuclear region. It is found in the nucleus. In terms of biological role, small GTPase. Negatively regulates the transcription regulation activity of the APBB1/FE65-APP complex via its interaction with APBB1/FE65. The polypeptide is Dexamethasone-induced Ras-related protein 1 (RASD1) (Homo sapiens (Human)).